Consider the following 103-residue polypeptide: Matrix Gla protein (103 aa).

The N-terminal stretch at 1–19 is a signal peptide; it reads MKSLILLAILAALAVVTLC. At Glu-21 the chain carries 4-carboxyglutamate. 3 positions are modified to phosphoserine: Ser-22, Ser-25, and Ser-28. The Gla domain occupies 51-97; that stretch reads RAKVQERIRERSKPVHELNREACDDYRLCERYAMVYGYNAAYNRYFR. A 4-carboxyglutamate mark is found at Glu-56, Glu-60, Glu-67, and Glu-71. Cys-73 and Cys-79 form a disulfide bridge. Residues 97 to 103 constitute a propeptide, removed in mature form; probably by carboxypeptidase N; that stretch reads RKRRGTK.

This sequence belongs to the osteocalcin/matrix Gla protein family. Requires vitamin K-dependent gamma-carboxylation for its function.

The protein localises to the secreted. Functionally, associates with the organic matrix of bone and cartilage. Thought to act as an inhibitor of bone formation. The chain is Matrix Gla protein (MGP) from Homo sapiens (Human).